A 215-amino-acid chain; its full sequence is Keratin-associated protein 26-1 (215 aa).

The protein belongs to the PMG family. In terms of assembly, interacts with hair keratins.

In the hair cortex, hair keratin intermediate filaments are embedded in an interfilamentous matrix, consisting of hair keratin-associated proteins (KRTAP), which are essential for the formation of a rigid and resistant hair shaft through their extensive disulfide bond cross-linking with abundant cysteine residues of hair keratins. The matrix proteins include the high-sulfur and high-glycine-tyrosine keratins. The protein is Keratin-associated protein 26-1 of Mus musculus (Mouse).